The sequence spans 228 residues: Uracil-DNA glycosylase (228 aa).

The Proton acceptor role is filled by aspartate 64.

The protein belongs to the uracil-DNA glycosylase (UDG) superfamily. UNG family.

It is found in the cytoplasm. The catalysed reaction is Hydrolyzes single-stranded DNA or mismatched double-stranded DNA and polynucleotides, releasing free uracil.. Excises uracil residues from the DNA which can arise as a result of misincorporation of dUMP residues by DNA polymerase or due to deamination of cytosine. The chain is Uracil-DNA glycosylase from Yersinia pseudotuberculosis serotype O:1b (strain IP 31758).